The primary structure comprises 303 residues: Acetyl-coenzyme A carboxylase carboxyl transferase subunit beta (303 aa).

The CoA carboxyltransferase N-terminal domain occupies 29–298 (LWVKCPETGQ…ATPAPASAAA (270 aa)).

The protein belongs to the AccD/PCCB family. Acetyl-CoA carboxylase is a heterohexamer composed of biotin carboxyl carrier protein (AccB), biotin carboxylase (AccC) and two subunits each of ACCase subunit alpha (AccA) and ACCase subunit beta (AccD).

It is found in the cytoplasm. The catalysed reaction is N(6)-carboxybiotinyl-L-lysyl-[protein] + acetyl-CoA = N(6)-biotinyl-L-lysyl-[protein] + malonyl-CoA. Its pathway is lipid metabolism; malonyl-CoA biosynthesis; malonyl-CoA from acetyl-CoA: step 1/1. Functionally, component of the acetyl coenzyme A carboxylase (ACC) complex. Biotin carboxylase (BC) catalyzes the carboxylation of biotin on its carrier protein (BCCP) and then the CO(2) group is transferred by the transcarboxylase to acetyl-CoA to form malonyl-CoA. This chain is Acetyl-coenzyme A carboxylase carboxyl transferase subunit beta, found in Methylobacterium sp. (strain 4-46).